Here is a 186-residue protein sequence, read N- to C-terminus: Peptide deformylase (186 aa).

Positions 99 and 141 each coordinate Fe cation. Residue glutamate 142 is part of the active site. Histidine 145 is a Fe cation binding site.

It belongs to the polypeptide deformylase family. It depends on Fe(2+) as a cofactor.

The catalysed reaction is N-terminal N-formyl-L-methionyl-[peptide] + H2O = N-terminal L-methionyl-[peptide] + formate. Functionally, removes the formyl group from the N-terminal Met of newly synthesized proteins. Requires at least a dipeptide for an efficient rate of reaction. N-terminal L-methionine is a prerequisite for activity but the enzyme has broad specificity at other positions. The protein is Peptide deformylase of Chlamydia felis (strain Fe/C-56) (Chlamydophila felis).